The sequence spans 109 residues: WRMVTEHTSTVIVMLTGLVEKGKKKCEKYWPDLGRRATYGQIALKTVDETHVGSYIKRMLEITSNGKMQFIHHFQFTSWPDYGVPVATSDLFRFHKAVTRIKTQKPIVV.

Residues 1–109 (WRMVTEHTST…RIKTQKPIVV (109 aa)) enclose the Tyrosine-protein phosphatase domain. Asp-81 contributes to the substrate binding site.

The protein belongs to the protein-tyrosine phosphatase family.

It catalyses the reaction O-phospho-L-tyrosyl-[protein] + H2O = L-tyrosyl-[protein] + phosphate. This chain is Tyrosine-protein phosphatase 16 (STY-16), found in Styela plicata (Wrinkled sea squirt).